A 351-amino-acid chain; its full sequence is Replication-associated protein (351 aa).

Residues 8–116 (QINAKNYFLT…DGDTWRWGTF (109 aa)) enclose the CRESS-DNA virus Rep endonuclease domain. An RCR-1 motif is present at residues 15–18 (FLTY). Residues E49, H57, and H59 each contribute to the a divalent metal cation site. An RCR-2 motif is present at residues 57 to 59 (HLH). Y103 functions as the For DNA cleavage activity in the catalytic mechanism. An RCR-3 motif is present at residues 103–106 (YIDK). D107 is a binding site for a divalent metal cation. The interval 143–153 (KSEALKILREL) is binding to RBR1. Residues 156 to 176 (RDYLRDFHHISSNLDRIFTKP) form an oligomerization region. Position 220 to 227 (220 to 227 (GDSRTGKT)) interacts with ATP.

The protein belongs to the geminiviridae Rep protein family. Homooligomer. Interacts with the replication enhancer protein (REn). Interacts with host retinoblastoma-related protein 1 (RBR1), and may thereby induce the transcription of host replicative enzymes even if the cell is not dividing anymore. Interacts with host PCNA. Interacts with host SCE1 protein. The cofactor is Mg(2+). Requires Mn(2+) as cofactor.

It is found in the host nucleus. Essential for the replication of viral ssDNA. The closed circular ssDNA genome is first converted to a superhelical dsDNA. Rep binds a specific region at the genome origin of replication. It introduces an endonucleolytic nick within the conserved sequence 5'-TAATATTAC-3' in the intergenic region of the genome present in all geminiviruses, thereby initiating the rolling circle replication (RCR). Following cleavage, binds covalently to the 5'-phosphate of DNA as a tyrosyl ester. The cleavage gives rise to a free 3'-OH that serves as a primer for the cellular DNA polymerase. The polymerase synthesizes the (+) strand DNA by rolling circle mechanism. After one round of replication, a Rep-catalyzed nucleotidyl transfer reaction releases a circular single-stranded virus genome, thereby terminating the replication. Displays origin-specific DNA cleavage, nucleotidyl transferase, ATPase and helicase activities. This Manihot esculenta (Cassava) protein is Replication-associated protein.